A 525-amino-acid chain; its full sequence is EGF domain-specific O-linked N-acetylglucosamine transferase (525 aa).

The signal sequence occupies residues 1–24 (MVPLRLVLLLHIIHFSCENEVGSA). The Required for optimal activity signature appears at 293 to 295 (DYE). Asn-352 carries N-linked (GlcNAc...) asparagine glycosylation. The short motif at 522–525 (RDEL) is the Prevents secretion from ER element.

The protein belongs to the glycosyltransferase 61 family.

It is found in the endoplasmic reticulum lumen. It catalyses the reaction L-seryl-[protein] + UDP-N-acetyl-alpha-D-glucosamine = 3-O-(N-acetyl-beta-D-glucosaminyl)-L-seryl-[protein] + UDP + H(+). The enzyme catalyses L-threonyl-[protein] + UDP-N-acetyl-alpha-D-glucosamine = 3-O-(N-acetyl-beta-D-glucosaminyl)-L-threonyl-[protein] + UDP + H(+). Its function is as follows. Catalyzes the transfer of a single N-acetylglucosamine from UDP-GlcNAc to a serine or threonine residue in extracellular proteins resulting in their modification with a beta-linked N-acetylglucosamine (O-GlcNAc). Specifically glycosylates the Thr residue located between the fifth and sixth conserved cysteines of folded EGF-like domains. The polypeptide is EGF domain-specific O-linked N-acetylglucosamine transferase (eogt) (Xenopus laevis (African clawed frog)).